The primary structure comprises 926 residues: MSLPNAFVTLLTTSSYLPGALVLLHALHDLHPAPRDFQIVALVTPETVDAATIGELRRAGYDLVIGVEPIGSGKAGQVGLELMGRPDLNFALTKLHLFRLAPFFSTLIYLDADILPLRPISHLFTSTAPHVFSACPDTGWPDCFNSGFMVIRPRESDWDGLKGMLKDGEGEDGLYREAGNGSFDGADQGLLNEWFSEDGGGGDWNRLSFTYNVTPSAAYTWAPAYKRFGHKISNVHFIGPNKPWTSLPGRPAGVSNVKGKENSYDYLSLIDRWFAVYDKHVRPASALDPDISRRFAVPQTIAAWDSHANQARAAATVLPEDKLDLSELKAATERGVNAFKPGQYTSLPLEGRVDLIMPKPKAIPRAPISQLVASSTIAPSVSPSALTPPPADAAPAPAPAPVPTQTEQKTAQPSVWDAQRSSPPASAPPEMSVPHAYYHNAWEAPLSQQSSYYAHPESHRPATEHKEPEYPTLPKEVTGDSWYARFATSTPDKRAISAVFPWEEKSYGPGYGHGSRPKPERVFPKGEEPLPSLVQQLIHPLQPPSISIQNPTPPHPAHSQHQSHATGMGMAGQAPKSPSPPPRHVSMVEAMASYKNVWDDIPQIGRYVDIMSGKTGGKSVRGVSTRGHGHGHGHIQGHGQGQKQPQAQTHERNTSLHSLQSVPGTPRTQYSTFGKSPRLTNARNLERRESFEQPEDSADGDDENSTSASEEEGGKSREGNSSKPYKGNKKYKDRWAQTDRVKTVDETVQTQTHAGEEAAAGGLKMWGLPHASAHGRKSSKEIPFPIGSGNGRAGGGGQREAQTQHQSTYYEYQQQHPHSQQSRQGSMASPKPELNVRLPDYSFDFKGATSHAQGLAQAQAQAHGQPQGQGANPNLNAQHRHRPSGSFSTIYGGRGRVWDPNTDVEVRRRDSQEVLARFMQGSLGRG.

UDP is bound by residues leucine 10, threonine 12, tyrosine 16, and arginine 85. 13 residues coordinate UDP-alpha-D-glucose: leucine 10, threonine 12, tyrosine 16, arginine 85, lysine 94, aspartate 111, alanine 112, aspartate 113, asparagine 145, serine 146, aspartate 184, aspartate 187, and glutamine 188. Positions 111, 112, and 113 each coordinate UDP. Aspartate 111 lines the Mn(2+) pocket. Aspartate 113 is a Mn(2+) binding site. Tyrosine 219 carries O-linked (Glc...) tyrosine glycosylation. Positions 236, 239, and 242 each coordinate UDP. Histidine 236 is a Mn(2+) binding site. Residues glycine 239 and lysine 242 each contribute to the UDP-alpha-D-glucose site. Disordered regions lie at residues 379 to 432, 452 to 476, 547 to 584, 611 to 749, and 768 to 903; these read PSVS…PEMS, YYAH…LPKE, SIQN…PPRH, MSGK…ETVQ, and LPHA…PNTD. The span at 386–402 shows a compositional bias: pro residues; that stretch reads LTPPPADAAPAPAPAPV. The span at 404-413 shows a compositional bias: polar residues; the sequence is TQTEQKTAQP. Basic and acidic residues predominate over residues 456–469; that stretch reads PESHRPATEHKEPE. Over residues 557–566 the composition is skewed to low complexity; it reads AHSQHQSHAT. Polar residues predominate over residues 655–683; the sequence is SLHSLQSVPGTPRTQYSTFGKSPRLTNAR. Residues 692–704 show a composition bias toward acidic residues; sequence EQPEDSADGDDEN. Residues 733–745 are compositionally biased toward basic and acidic residues; the sequence is DRWAQTDRVKTVD. Gly residues predominate over residues 788 to 798; that stretch reads SGNGRAGGGGQ. The segment covering 800–812 has biased composition (polar residues); that stretch reads EAQTQHQSTYYEY. Low complexity-rich tracts occupy residues 813-824 and 851-875; these read QQQHPHSQQSRQ and HAQG…NPNL.

This sequence belongs to the glycosyltransferase 8 family. Glycogenin subfamily. Mn(2+) serves as cofactor.

Its subcellular location is the cytoplasm. It localises to the vacuole. The catalysed reaction is L-tyrosyl-[glycogenin] + UDP-alpha-D-glucose = alpha-D-glucosyl-L-tyrosyl-[glycogenin] + UDP + H(+). It carries out the reaction [1,4-alpha-D-glucosyl](n)-L-tyrosyl-[glycogenin] + UDP-alpha-D-glucose = [1,4-alpha-D-glucosyl](n+1)-L-tyrosyl-[glycogenin] + UDP + H(+). Self-glucosylating initiator of glycogen synthesis. It catalyzes the formation of a short alpha (1,4)-glucosyl chain covalently attached via a glucose 1-O-tyrosyl linkage to internal tyrosine residues and these chains act as primers for the elongation reaction catalyzed by glycogen synthase. In Cryptococcus neoformans var. grubii serotype A (strain H99 / ATCC 208821 / CBS 10515 / FGSC 9487) (Filobasidiella neoformans var. grubii), this protein is Glycogenin.